Consider the following 519-residue polypeptide: Serine/threonine-protein kinase RIO3 (519 aa).

S8 and S112 each carry phosphoserine. The disordered stretch occupies residues 121–159 (PYEDSDSSEDEVDWQDTRDDPYRPAKPVPTPKKGFIGKG). Y122 carries the phosphotyrosine modification. A compositionally biased stretch (acidic residues) spans 124–134 (DSDSSEDEVDW). Residues S125, S127, and S128 each carry the phosphoserine modification. The region spanning 251 to 519 (ETITGCISTG…DGDPPLLYDE (269 aa)) is the Protein kinase domain. ATP-binding positions include 257–265 (ISTGKESVV) and K290. The active-site Proton acceptor is D406.

It belongs to the protein kinase superfamily. RIO-type Ser/Thr kinase family. Interacts with CASP10. Interacts with IRF3; RIOK3 probably mediates the interaction of TBK1 with IRF3. Associated with 40S pre-ribosomal particles. Requires Mg(2+) as cofactor. In terms of processing, autophosphorylated (in vitro). As to expression, widely expressed.

Its subcellular location is the cytoplasm. It carries out the reaction L-seryl-[protein] + ATP = O-phospho-L-seryl-[protein] + ADP + H(+). The catalysed reaction is L-threonyl-[protein] + ATP = O-phospho-L-threonyl-[protein] + ADP + H(+). In terms of biological role, involved in regulation of type I interferon (IFN)-dependent immune response which plays a critical role in the innate immune response against DNA and RNA viruses. May act as an adapter protein essential for the recruitment of TBK1 to IRF3. Phosphorylates IFIH1 on 'Ser-828' interfering with IFIH1 filament assembly on long dsRNA and resulting in attenuated IFIH1-signaling. Can inhibit CASP10 isoform 7-mediated activation of the NF-kappaB signaling pathway. May play a role in the biogenesis of the 40S ribosomal subunit. Involved in the processing of 21S pre-rRNA to the mature 18S rRNA. The sequence is that of Serine/threonine-protein kinase RIO3 (RIOK3) from Homo sapiens (Human).